The following is a 153-amino-acid chain: Protein-export protein SecB (153 aa).

This sequence belongs to the SecB family. In terms of assembly, homotetramer, a dimer of dimers. One homotetramer interacts with 1 SecA dimer.

Its subcellular location is the cytoplasm. One of the proteins required for the normal export of preproteins out of the cell cytoplasm. It is a molecular chaperone that binds to a subset of precursor proteins, maintaining them in a translocation-competent state. It also specifically binds to its receptor SecA. This chain is Protein-export protein SecB, found in Erwinia tasmaniensis (strain DSM 17950 / CFBP 7177 / CIP 109463 / NCPPB 4357 / Et1/99).